A 108-amino-acid polypeptide reads, in one-letter code: Large ribosomal subunit protein bL31B (108 aa).

A disordered region spans residues P85 to K108. Residues K97 to K108 show a composition bias toward basic residues.

Belongs to the bacterial ribosomal protein bL31 family. Type B subfamily. As to quaternary structure, part of the 50S ribosomal subunit.

This Chlamydia muridarum (strain MoPn / Nigg) protein is Large ribosomal subunit protein bL31B.